The sequence spans 117 residues: Large ribosomal subunit protein uL18 (117 aa).

Belongs to the universal ribosomal protein uL18 family. In terms of assembly, part of the 50S ribosomal subunit; part of the 5S rRNA/L5/L18/L25 subcomplex. Contacts the 5S and 23S rRNAs.

Its function is as follows. This is one of the proteins that bind and probably mediate the attachment of the 5S RNA into the large ribosomal subunit, where it forms part of the central protuberance. The protein is Large ribosomal subunit protein uL18 of Photorhabdus laumondii subsp. laumondii (strain DSM 15139 / CIP 105565 / TT01) (Photorhabdus luminescens subsp. laumondii).